The following is a 620-amino-acid chain: MMMGRLVFVIWLYNCLCLLLLSSLVDADQANIDCLRTFKSQVEDPNRYLSTWVFGNETAGYICKFSGVTCWHDDENRVLSIKLSGYGLRGVFPPAVKLCADLTGLDLSRNNFSGPLPANISTLIPLVTILDLSYNSFSGEIPMLISNITFLNTLMLQHNQFTGTLPPQLAQLGRLKTFSVSDNRLVGPIPNFNQTLQFKQELFANNLDLCGKPLDDCKSASSSRGKVVIIAAVGGLTAAALVVGVVLFFYFRKLGAVRKKQDDPEGNRWAKSLKGQKGVKVFMFKKSVSKMKLSDLMKATEEFKKDNIIATGRTGTMYKGRLEDGSLLMIKRLQDSQRSEKEFDAEMKTLGSVKNRNLVPLLGYCVANKERLLMYEYMANGYLYDQLHPADEESFKPLDWPSRLKIAIGTAKGLAWLHHSCNPRIIHRNISSKCILLTAEFEPKISDFGLARLMNPIDTHLSTFVNGEFGDFGYVAPEYSRTMVATPKGDVYSFGVVLLELVTGQKATSVTKVSEEKAEEENFKGNLVEWITKLSSESKLQEAIDRSLLGNGVDDEIFKVLKVACNCVLPEIAKQRPTMFEVYQLLRAIGESYNFTADDDILIPSESGEGDFIEELIVAR.

Residues 1 to 27 form the signal peptide; the sequence is MMMGRLVFVIWLYNCLCLLLLSSLVDA. The Extracellular segment spans residues 28 to 228; it reads DQANIDCLRT…SASSSRGKVV (201 aa). N-linked (GlcNAc...) asparagine glycans are attached at residues asparagine 56, asparagine 111, asparagine 119, and asparagine 147. LRR repeat units follow at residues 101–124, 126–148, 150–172, and 174–196; these read DLTG…STLI, LVTI…ISNI, FLNT…LAQL, and RLKT…NQTL. Residue asparagine 193 is glycosylated (N-linked (GlcNAc...) asparagine). A helical transmembrane segment spans residues 229–249; it reads IIAAVGGLTAAALVVGVVLFF. The Cytoplasmic portion of the chain corresponds to 250-620; that stretch reads YFRKLGAVRK…DFIEELIVAR (371 aa). The residue at position 300 (threonine 300) is a Phosphothreonine. The 294-residue stretch at 303-596 folds into the Protein kinase domain; sequence FKKDNIIATG…RAIGESYNFT (294 aa). Residues 309-317 and lysine 331 contribute to the ATP site; that span reads IATGRTGTM. Threonine 463 carries the phosphothreonine modification. At tyrosine 479 the chain carries Phosphotyrosine. Threonine 482 carries the post-translational modification Phosphothreonine.

Belongs to the protein kinase superfamily. Ser/Thr protein kinase family.

The protein resides in the cell membrane. This Arabidopsis thaliana (Mouse-ear cress) protein is Probably inactive leucine-rich repeat receptor-like protein kinase At5g48380.